The chain runs to 422 residues: Serine--tRNA ligase (422 aa).

231-233 is an L-serine binding site; the sequence is TSE. 262-264 is an ATP binding site; the sequence is RQE. Glutamate 285 lines the L-serine pocket. ATP is bound at residue 349–352; that stretch reads EISS. Serine 384 lines the L-serine pocket.

It belongs to the class-II aminoacyl-tRNA synthetase family. Type-1 seryl-tRNA synthetase subfamily. In terms of assembly, homodimer. The tRNA molecule binds across the dimer.

Its subcellular location is the cytoplasm. The catalysed reaction is tRNA(Ser) + L-serine + ATP = L-seryl-tRNA(Ser) + AMP + diphosphate + H(+). It catalyses the reaction tRNA(Sec) + L-serine + ATP = L-seryl-tRNA(Sec) + AMP + diphosphate + H(+). It participates in aminoacyl-tRNA biosynthesis; selenocysteinyl-tRNA(Sec) biosynthesis; L-seryl-tRNA(Sec) from L-serine and tRNA(Sec): step 1/1. In terms of biological role, catalyzes the attachment of serine to tRNA(Ser). Is also able to aminoacylate tRNA(Sec) with serine, to form the misacylated tRNA L-seryl-tRNA(Sec), which will be further converted into selenocysteinyl-tRNA(Sec). The protein is Serine--tRNA ligase of Mycoplasma mycoides subsp. mycoides SC (strain CCUG 32753 / NCTC 10114 / PG1).